The primary structure comprises 450 residues: Putative MYST-like histone acetyltransferase 1 (450 aa).

The Tudor-knot domain occupies 63–122 (LEVGTRVMCRWRDQKLHPVKVIERRKSSTSSSPADYEYYVHYTEFNRRLDEWVKLEQLDL). The region spanning 174 to 445 (TKVKNIAKIE…VDVSKLIWTP (272 aa)) is the MYST-type HAT domain. Residues 207-232 (LFFCEFCLNFMKRKEQLQRHMKKCDL) form a C2HC MYST-type zinc finger. K274 carries the post-translational modification N6-acetyllysine; by autocatalysis. Residues 317–319 (ILT) and 324–330 (QRKGYGK) each bind acetyl-CoA. The Proton donor/acceptor role is filled by E350. Position 354 (S354) interacts with acetyl-CoA.

This sequence belongs to the MYST (SAS/MOZ) family. Autoacetylation at Lys-274 is required for proper function.

Its subcellular location is the nucleus. It catalyses the reaction L-lysyl-[protein] + acetyl-CoA = N(6)-acetyl-L-lysyl-[protein] + CoA + H(+). Its function is as follows. Histone acetyltransferase which may be involved in transcriptional activation. This Oryza sativa subsp. japonica (Rice) protein is Putative MYST-like histone acetyltransferase 1.